The chain runs to 395 residues: D-alanine--D-alanine ligase (395 aa).

In terms of domain architecture, ATP-grasp spans 172-391 (KVVLDAAGIP…YTELITRLIE (220 aa)). 204–266 (DAGLTYPLFV…EQGIDGREIE (63 aa)) contributes to the ATP binding site. Aspartate 345, glutamate 358, and asparagine 360 together coordinate Mg(2+).

This sequence belongs to the D-alanine--D-alanine ligase family. The cofactor is Mg(2+). Mn(2+) serves as cofactor.

The protein resides in the cytoplasm. The enzyme catalyses 2 D-alanine + ATP = D-alanyl-D-alanine + ADP + phosphate + H(+). The protein operates within cell wall biogenesis; peptidoglycan biosynthesis. In terms of biological role, cell wall formation. In Bifidobacterium longum (strain DJO10A), this protein is D-alanine--D-alanine ligase.